The sequence spans 176 residues: Dual-action ribosomal maturation protein DarP (176 aa).

Residues 1-10 (MTVPNHQQDI) show a composition bias toward polar residues. A disordered region spans residues 1-22 (MTVPNHQQDISDSDLESRPSKT).

It belongs to the DarP family.

The protein resides in the cytoplasm. In terms of biological role, member of a network of 50S ribosomal subunit biogenesis factors which assembles along the 30S-50S interface, preventing incorrect 23S rRNA structures from forming. Promotes peptidyl transferase center (PTC) maturation. This chain is Dual-action ribosomal maturation protein DarP, found in Nitrosomonas eutropha (strain DSM 101675 / C91 / Nm57).